The chain runs to 59 residues: Potassium channel toxin alpha-KTx 1.1 (59 aa).

An N-terminal signal peptide occupies residues 1-22 (MKILSVLLLALIICSIVGWSEA). Position 23 is a pyrrolidone carboxylic acid (Gln23). Intrachain disulfides connect Cys29/Cys50, Cys35/Cys55, and Cys39/Cys57. The tract at residues 48–55 (GKCMNKKC) is interaction with Ca(2+)-activated K(+) channels.

Belongs to the short scorpion toxin superfamily. Potassium channel inhibitor family. Alpha-KTx 01 subfamily. Expressed by the venom gland.

It is found in the secreted. Functionally, this toxin inhibits numerous potassium channels: shaker (Ki=227 nM), Kv1.2/KCNA2 (nanomolar range), Kv1.3/KCNA3 (nanomolar range), Kv1.5/KCNA5 (Kd&gt;100 nM), Kv1.6/KCNA6 (Ki=22 nM), KCa1.1/KCNMA1 (IC(50)=5.9 nM). It blocks channel activity by a simple bimolecular inhibition process. It also shows a weak interaction with nicotinic acetylcholine receptors (nAChR), suggesting it may weakly inhibit it. It also exhibits pH-specific antimicrobial activities against bacteria (B.subtilis, E.coli and S.aureus) and the fungus C.albicans. The polypeptide is Potassium channel toxin alpha-KTx 1.1 (Leiurus hebraeus (Hebrew deathstalker scorpion)).